Reading from the N-terminus, the 305-residue chain is Peroxisome biogenesis factor 2 (305 aa).

The Peroxisomal matrix segment spans residues 1–15; sequence MAAREESTQSANRVL. The helical transmembrane segment at 16–42 threads the bilayer; it reads RISQLDALELNKALEQLVWSQFTQCFH. Residues 43–48 lie on the Cytoplasmic side of the membrane; sequence GFKPGL. A helical membrane pass occupies residues 49 to 74; that stretch reads LARFEPEVKAFLWLFLWRFTIYSKNA. Residues 75–98 lie on the Peroxisomal matrix side of the membrane; the sequence is TVGQSVLNIQYKNDSSPNPVYQPP. Residues 99–125 form a helical membrane-spanning segment; sequence SKNQKLLYAVCTIGGRWLEERCYDLFR. At 126 to 133 the chain is on the cytoplasmic side; the sequence is NRHLASFG. A helical membrane pass occupies residues 134-160; that stretch reads KAKQCMNFVVGLLKLGELMNFLIFLQK. The Peroxisomal matrix portion of the chain corresponds to 161-187; the sequence is GKFATLTERLLGIHSVFCKPQSMREVG. The helical transmembrane segment at 188–211 threads the bilayer; that stretch reads FEYMNRELLWHGFAEFLVFLLPLI. Residues 212-305 are Cytoplasmic-facing; sequence NIQKLKAKLS…GIEMSEVNAL (94 aa). Zn(2+)-binding residues include C244, C247, C259, H261, C264, C267, C280, and C283. The RING-type zinc finger occupies 244–284; that stretch reads CALCGEWPTMPHTIGCEHVFCYYCVKSSFLFDMYFTCPKCG.

The protein belongs to the pex2/pex10/pex12 family. In terms of assembly, component of the PEX2-PEX10-PEX12 retrotranslocation channel, composed of PEX2, PEX10 and PEX12. Forms intramolecular and intermolecular disulfide bonds in response to reactive oxygen species (ROS), promoting higher stability.

The protein localises to the peroxisome membrane. The enzyme catalyses [E2 ubiquitin-conjugating enzyme]-S-ubiquitinyl-L-cysteine + [acceptor protein]-L-cysteine = [E2 ubiquitin-conjugating enzyme]-L-cysteine + [acceptor protein]-S-ubiquitinyl-L-cysteine.. The catalysed reaction is S-ubiquitinyl-[E2 ubiquitin-conjugating enzyme]-L-cysteine + [acceptor protein]-L-lysine = [E2 ubiquitin-conjugating enzyme]-L-cysteine + N(6)-ubiquitinyl-[acceptor protein]-L-lysine.. It participates in protein modification; protein ubiquitination. Its function is as follows. E3 ubiquitin-protein ligase component of a retrotranslocation channel required for peroxisome organization by mediating export of the PEX5 receptor from peroxisomes to the cytosol, thereby promoting PEX5 recycling. The retrotranslocation channel is composed of PEX2, PEX10 and PEX12; each subunit contributing transmembrane segments that coassemble into an open channel that specifically allows the passage of PEX5 through the peroxisomal membrane. PEX2 also regulates peroxisome organization by acting as a E3 ubiquitin-protein ligase. PEX2 ubiquitinates PEX5 during its passage through the retrotranslocation channel: catalyzes monoubiquitination of PEX5 at 'Cys-11', a modification that acts as a signal for PEX5 extraction into the cytosol. Required for pexophagy in response to starvation by mediating ubiquitination of peroxisomal proteins, such as PEX5 and ABCD3/PMP70. Also involved in the response to reactive oxygen species (ROS) by mediating 'Lys-48'-linked polyubiquitination and subsequent degradation of PNPLA2/ATGL, thereby regulating lipolysis. In Rattus norvegicus (Rat), this protein is Peroxisome biogenesis factor 2 (Pex2).